A 1214-amino-acid polypeptide reads, in one-letter code: Myosin-1 (1214 aa).

A disordered region spans residues 1–21; sequence MAIIKRGARNKTAQEPAKRSA. In terms of domain architecture, Myosin motor spans 36–715; sequence VGVSDLTLLS…TLFALEHMRD (680 aa). 129-136 is an ATP binding site; sequence GESGAGKT. Residue serine 357 is modified to Phosphoserine. The segment at 404-486 is actin-binding; that stretch reads SIGILDIYGF…PGIFAAMNDS (83 aa). 2 IQ domains span residues 719–739 and 740–765; these read YNMAARIQRAWRRFLQRRIDS and ATRIQRAIREKKGGNKYEKLRDEGSK. The 191-residue stretch at 771–961 folds into the TH1 domain; sequence KERRTMSLLG…TILVRRGHPA (191 aa). Disordered stretches follow at residues 926 to 1090, 1129 to 1177, and 1193 to 1214; these read KPGK…SELP, HQGG…AAAQ, and NKMRVESDGEDNGNDDDDDDDW. The span at 965–980 shows a compositional bias: basic residues; the sequence is QKKKPKKGKGHSKHHS. 2 stretches are compositionally biased toward low complexity: residues 981–1000 and 1037–1057; these read TSTSAPRSSVQSSQPSAPVS and AAQPQATPQPAQVTQPQQKKV. A compositionally biased stretch (pro residues) spans 1058-1067; it reads APPPPPPPPM. The SH3 domain maps to 1069–1131; the sequence is SSEPKYEAAY…PTNYVVKHQG (63 aa). The span at 1157–1177 shows a compositional bias: low complexity; the sequence is VSSSQSETATTATPASVAAAQ. A compositionally biased stretch (acidic residues) spans 1200-1214; that stretch reads DGEDNGNDDDDDDDW.

It belongs to the TRAFAC class myosin-kinesin ATPase superfamily. Myosin family. Phosphorylation of the TEDS site (Ser-357) is required for the polarization of the actin cytoskeleton. Phosphorylation probably activates the myosin-I ATPase activity.

It is found in the cytoplasm. The protein localises to the cytoskeleton. It localises to the actin patch. Functionally, type-I myosin implicated in the organization of the actin cytoskeleton. Required for proper actin cytoskeleton polarization. At the cell cortex, assembles in patch-like structures together with proteins from the actin-polymerizing machinery and promotes actin assembly. Functions as actin nucleation-promoting factor (NPF) for the Arp2/3 complex. The chain is Myosin-1 (MYO1) from Vanderwaltozyma polyspora (strain ATCC 22028 / DSM 70294 / BCRC 21397 / CBS 2163 / NBRC 10782 / NRRL Y-8283 / UCD 57-17) (Kluyveromyces polysporus).